The chain runs to 365 residues: Flagellar P-ring protein (365 aa).

An N-terminal signal peptide occupies residues 1–19 (MIKFLSALILLLVTTAAQA).

This sequence belongs to the FlgI family. As to quaternary structure, the basal body constitutes a major portion of the flagellar organelle and consists of four rings (L,P,S, and M) mounted on a central rod.

It localises to the periplasm. It is found in the bacterial flagellum basal body. Its function is as follows. Assembles around the rod to form the L-ring and probably protects the motor/basal body from shearing forces during rotation. The protein is Flagellar P-ring protein of Shigella flexneri serotype 5b (strain 8401).